Consider the following 256-residue polypeptide: MSNIDLIGMSNRDLIGMSNSELLTVEPLDLQFPFELKKQISCSLYLTNKTDNNVAFKVKTTNPKKYCVRPNTGVVLPRSTCEVLVTMQAQKEAPSDMQCKDKFLLQGVIASPGVTAKEVTPEMFSKEAGHRVEETKLRVTYVAPPRPPSPVHEGSEEGSSPRASVSDNGHGSEFSFERFIVDNKAGHQENTSEARALITKLTEEKQSAIQLNNRLQRELDQLRRESKKSQSGGIPFMYVLLVGLIGLILGYIMKRT.

Methionine 1 is modified (N-acetylmethionine). Residues 1 to 232 (MSNIDLIGMS…RRESKKSQSG (232 aa)) are Cytoplasmic-facing. Serine 2 carries the post-translational modification N-acetylserine; in Vesicle-associated protein 1-1, N-terminally processed. The 121-residue stretch at 22-142 (LLTVEPLDLQ…EETKLRVTYV (121 aa)) folds into the MSP domain. A disordered region spans residues 142-169 (VAPPRPPSPVHEGSEEGSSPRASVSDNG). Position 149 is a phosphoserine (serine 149). Positions 157-169 (EGSSPRASVSDNG) are enriched in polar residues. A coiled-coil region spans residues 187–232 (HQENTSEARALITKLTEEKQSAIQLNNRLQRELDQLRRESKKSQSG). A helical; Anchor for type IV membrane protein transmembrane segment spans residues 233-253 (GIPFMYVLLVGLIGLILGYIM).

It belongs to the VAMP-associated protein (VAP) (TC 9.B.17) family. In terms of assembly, homodimer or homooligomer. Interacts with the cowpea mosaic virus (CPMV) NTP-binding protein (NTB). Interacts with NET3C.

The protein resides in the endoplasmic reticulum membrane. Its subcellular location is the protein storage vacuole membrane. Part of a membrane-cytoskeletal adapter complex that forms a bridge between the endoplasmic reticulum and the plasma membrane. Associates with microtubules. In Arabidopsis thaliana (Mouse-ear cress), this protein is Vesicle-associated protein 1-1 (PVA11).